The following is a 198-amino-acid chain: Peroxynitrite isomerase (198 aa).

Positions 20–26 match the GXWXGXG motif; it reads GVWEGTG. Histidine 189 is a heme b binding site.

The protein belongs to the nitrobindin family. Homodimer. It depends on heme b as a cofactor.

It catalyses the reaction peroxynitrite = nitrate. Its pathway is nitrogen metabolism. In terms of biological role, heme-binding protein able to scavenge peroxynitrite and to protect free L-tyrosine against peroxynitrite-mediated nitration, by acting as a peroxynitrite isomerase that converts peroxynitrite to nitrate. Therefore, this protein likely plays a role in peroxynitrite sensing and in the detoxification of reactive nitrogen and oxygen species (RNS and ROS, respectively). Is able to bind nitric oxide (NO) in vitro, but may act as a sensor of peroxynitrite levels in vivo. In Leifsonia xyli subsp. xyli (strain CTCB07), this protein is Peroxynitrite isomerase.